Here is a 361-residue protein sequence, read N- to C-terminus: T-box-containing protein TBX6L (361 aa).

The T-box DNA-binding region spans 36 to 209; sequence LWMKFHQIGT…NNPFAKGFRE (174 aa). Disordered stretches follow at residues 203–259 and 280–323; these read FAKG…VKEE and HAFP…QLPS. Basic and acidic residues-rich tracts occupy residues 206–220 and 234–259; these read GFREHGKNTRREGRA and KLPEEKESGAEERDFEKDENVDVKEE. Residues 280–290 are compositionally biased toward low complexity; the sequence is HAFPAASPAPA.

It is found in the nucleus. In terms of biological role, may be involved in regulating somitogenesis. In Gallus gallus (Chicken), this protein is T-box-containing protein TBX6L (TBX6L).